The sequence spans 452 residues: Exodeoxyribonuclease 7 large subunit (452 aa).

The protein belongs to the XseA family. Heterooligomer composed of large and small subunits.

The protein resides in the cytoplasm. It catalyses the reaction Exonucleolytic cleavage in either 5'- to 3'- or 3'- to 5'-direction to yield nucleoside 5'-phosphates.. In terms of biological role, bidirectionally degrades single-stranded DNA into large acid-insoluble oligonucleotides, which are then degraded further into small acid-soluble oligonucleotides. The sequence is that of Exodeoxyribonuclease 7 large subunit from Bacillus cereus (strain G9842).